A 273-amino-acid polypeptide reads, in one-letter code: Large ribosomal subunit protein uL2 (273 aa).

Positions 221–273 (RGTAMNPVDHPHGGGEGRNFGKHPVTPWGIQTKGKKTRSNKRTDKFIVRRRSK) are disordered.

Belongs to the universal ribosomal protein uL2 family. Part of the 50S ribosomal subunit. Forms a bridge to the 30S subunit in the 70S ribosome.

In terms of biological role, one of the primary rRNA binding proteins. Required for association of the 30S and 50S subunits to form the 70S ribosome, for tRNA binding and peptide bond formation. It has been suggested to have peptidyltransferase activity; this is somewhat controversial. Makes several contacts with the 16S rRNA in the 70S ribosome. The protein is Large ribosomal subunit protein uL2 of Sodalis glossinidius (strain morsitans).